A 206-amino-acid polypeptide reads, in one-letter code: Ribosomal RNA small subunit methyltransferase G (206 aa).

S-adenosyl-L-methionine is bound by residues G73, L78, 124–125 (VE), and R139.

The protein belongs to the methyltransferase superfamily. RNA methyltransferase RsmG family.

The protein resides in the cytoplasm. It carries out the reaction guanosine(527) in 16S rRNA + S-adenosyl-L-methionine = N(7)-methylguanosine(527) in 16S rRNA + S-adenosyl-L-homocysteine. Specifically methylates the N7 position of guanine in position 527 of 16S rRNA. In Yersinia pseudotuberculosis serotype O:1b (strain IP 31758), this protein is Ribosomal RNA small subunit methyltransferase G.